The chain runs to 292 residues: UPF0725 protein At4g28920 (292 aa).

The span at 1 to 17 (MSENDSSESDIEMDPEE) shows a compositional bias: acidic residues. Residues 1–24 (MSENDSSESDIEMDPEEEKVYRRQ) are disordered.

This sequence belongs to the UPF0725 (EMB2204) family.

This chain is UPF0725 protein At4g28920, found in Arabidopsis thaliana (Mouse-ear cress).